The primary structure comprises 92 residues: uncharacterized protein (92 aa).

This is an uncharacterized protein from Homo sapiens (Human).